The following is a 230-amino-acid chain: 3-isopropylmalate dehydratase small subunit (230 aa).

This sequence belongs to the LeuD family. LeuD type 1 subfamily. Heterodimer of LeuC and LeuD.

It catalyses the reaction (2R,3S)-3-isopropylmalate = (2S)-2-isopropylmalate. It participates in amino-acid biosynthesis; L-leucine biosynthesis; L-leucine from 3-methyl-2-oxobutanoate: step 2/4. Functionally, catalyzes the isomerization between 2-isopropylmalate and 3-isopropylmalate, via the formation of 2-isopropylmaleate. The polypeptide is 3-isopropylmalate dehydratase small subunit (Bifidobacterium longum (strain DJO10A)).